Reading from the N-terminus, the 470-residue chain is MNVSRLALAVVEPHIEVLNPFDGSIVGTVADVCASEVPHLLETGRSGARACAALPRHRRASILEQAALNIERDAKAFARLIVDEAGKTLKQAEKEVKRCVNTLKLSAEEAKRNAGEIVPFDAYEGAESRQGWFTREPLGLIVAITPYNDPLNLVAHKLGPAIAGGNAVILKPSELAPLSALKLVSYLVAAGLPETVVTVATGGAELGKALVAARDVRMISFTGGFVTGEQIARTAGLKKLAMDLGGNAPVIVMGDCNLDAAVDSCVSGAFWAAGQNCIGTQRLLIHAPIYEAFRERFVNQAQALVVGNPLLANTDIGPMITQQAAQNAEQMVNEALQQGATLLCGHRRQGNCYGATVLENVDHSSRIWRNEAFAPVVVLQVFETFDEAIALANEPEYALHAGIFTNDLSTAMSAARRIEAGGVMINDSSDFRFDAMPFGGSKYGSLGREGVRFAYEEMTQPKVVCLNVLG.

Residues T145 and K171 each coordinate NAD(+). D243 is a catalytic residue. Residue G245 participates in NAD(+) binding. Residue C277 is part of the active site. E371 is a binding site for NAD(+).

This sequence belongs to the aldehyde dehydrogenase family.

The enzyme catalyses L-aspartate 4-semialdehyde + NAD(+) + H2O = L-aspartate + NADH + 2 H(+). Dehydrogenase involved in the degradation of canavanine, the delta-oxa-analog of arginine, allowing growth on canavanine as sole nitrogen and carbon source. Probably catalyzes the NAD(+)-dependent oxidation of L-aspartate-semialdehyde to L-aspartate. This Pseudomonas canavaninivorans protein is Aspartate-semialdehyde dehydrogenase 1.